We begin with the raw amino-acid sequence, 283 residues long: Pantothenate synthetase (283 aa).

Residue 30–37 (MGNLHAGH) coordinates ATP. The active-site Proton donor is His37. Gln61 is a (R)-pantoate binding site. Gln61 contacts beta-alanine. An ATP-binding site is contributed by 149 to 152 (GEKD). A (R)-pantoate-binding site is contributed by Gln155. ATP contacts are provided by residues Val178 and 186-189 (LSSR).

It belongs to the pantothenate synthetase family. As to quaternary structure, homodimer.

It localises to the cytoplasm. The catalysed reaction is (R)-pantoate + beta-alanine + ATP = (R)-pantothenate + AMP + diphosphate + H(+). The protein operates within cofactor biosynthesis; (R)-pantothenate biosynthesis; (R)-pantothenate from (R)-pantoate and beta-alanine: step 1/1. Catalyzes the condensation of pantoate with beta-alanine in an ATP-dependent reaction via a pantoyl-adenylate intermediate. This chain is Pantothenate synthetase, found in Azotobacter vinelandii (strain DJ / ATCC BAA-1303).